A 214-amino-acid chain; its full sequence is Glycerol-3-phosphate acyltransferase (214 aa).

5 helical membrane passes run 8–28, 70–90, 111–131, 144–164, and 165–185; these read LILA…QIFF, LLPL…LIAV, AGVV…IFIV, IVVA…GIIL, and PSYD…ILIR.

This sequence belongs to the PlsY family. Probably interacts with PlsX.

It is found in the cell membrane. It catalyses the reaction an acyl phosphate + sn-glycerol 3-phosphate = a 1-acyl-sn-glycero-3-phosphate + phosphate. It participates in lipid metabolism; phospholipid metabolism. In terms of biological role, catalyzes the transfer of an acyl group from acyl-phosphate (acyl-PO(4)) to glycerol-3-phosphate (G3P) to form lysophosphatidic acid (LPA). This enzyme utilizes acyl-phosphate as fatty acyl donor, but not acyl-CoA or acyl-ACP. The sequence is that of Glycerol-3-phosphate acyltransferase from Streptococcus gordonii (strain Challis / ATCC 35105 / BCRC 15272 / CH1 / DL1 / V288).